A 309-amino-acid polypeptide reads, in one-letter code: Taste receptor type 2 member 20 (309 aa).

The Extracellular portion of the chain corresponds to 1-6 (MMSFLH). Residues 7-27 (IVFSILVVVAFILGNFANGFI) form a helical membrane-spanning segment. Over 28 to 46 (ALINFIAWVKRQKISSADQ) the chain is Cytoplasmic. The chain crosses the membrane as a helical span at residues 47–67 (IIAALAVSRVGLLWVILLHWY). At 68–79 (STVLNPTSSNLK) the chain is on the extracellular side. The chain crosses the membrane as a helical span at residues 80 to 100 (VTIFISNAWAVTNHFSIWLAA). The Cytoplasmic portion of the chain corresponds to 101–125 (SLSIFYLLKIVNFSRLIFHHLKRKA). Residues 126–146 (KSVVLVIVLGSLFFLVCHLVM) form a helical membrane-spanning segment. Residues 147–178 (KSTYINVWTEEYEGNVTWKIKLRNAMHLSNLT) lie on the Extracellular side of the membrane. N-linked (GlcNAc...) asparagine glycans are attached at residues asparagine 161 and asparagine 176. The helical transmembrane segment at 179-199 (VAMLANLIPFTLTLISFLLLI) threads the bilayer. The Cytoplasmic segment spans residues 200–229 (YSLCKHLKKMQLHGKGSQDPSTKIHIKALQ). The helical transmembrane segment at 230–250 (TVTSFLILLAIYFLCLITSFW) threads the bilayer. The Extracellular portion of the chain corresponds to 251-259 (NSKMRPKEI). The chain crosses the membrane as a helical span at residues 260-280 (VLMLCQAFGIIYPSFHSFILI). Topologically, residues 281 to 309 (WGNKTLKQTFLSVLWRVTCWAKGQNQSTP) are cytoplasmic.

The protein belongs to the G-protein coupled receptor T2R family.

It is found in the membrane. Functionally, receptor that may play a role in the perception of bitterness and is gustducin-linked. May play a role in sensing the chemical composition of the gastrointestinal content. The activity of this receptor may stimulate alpha gustducin, mediate PLC-beta-2 activation and lead to the gating of TRPM5. The chain is Taste receptor type 2 member 20 (TAS2R20) from Gorilla gorilla gorilla (Western lowland gorilla).